Consider the following 537-residue polypeptide: Cytochrome P450 27C1 (537 aa).

Cys483 contacts heme.

The protein belongs to the cytochrome P450 family. Heme serves as cofactor. As to expression, expressed in the dorsal third of retinal pigment epithelium, but not in the ventral counterpart (at protein level).

The protein localises to the membrane. It catalyses the reaction all-trans-retinol + 2 reduced [adrenodoxin] + O2 + 2 H(+) = all-trans-3,4-didehydroretinol + 2 oxidized [adrenodoxin] + 2 H2O. Efficiently catalyzes the conversion of all-trans retinol (also called vitamin A1, the precursor of 11-cis retinal) to 3,4-didehydroretinol (also called vitamin A2, the precursor of 11-cis 3,4-didehydroretinal), also acts on all-trans retinal and all-trans retinoic acid. The replacement of 11-cis retinal chromophore in photopigments with 11-cis 3,4-didehydroretinal enhances sensitivity to long-wavelength light. This may improve vision in fresh water which is often turbid. The polypeptide is Cytochrome P450 27C1 (cyp27c1) (Aquarana catesbeiana (American bullfrog)).